We begin with the raw amino-acid sequence, 401 residues long: Imidazolonepropionase (401 aa).

2 residues coordinate Fe(3+): His-66 and His-68. Zn(2+) contacts are provided by His-66 and His-68. Arg-75, Tyr-138, and His-171 together coordinate 4-imidazolone-5-propanoate. N-formimidoyl-L-glutamate is bound at residue Tyr-138. His-236 provides a ligand contact to Fe(3+). His-236 provides a ligand contact to Zn(2+). Gln-239 contributes to the 4-imidazolone-5-propanoate binding site. Residue Asp-311 participates in Fe(3+) binding. Residue Asp-311 participates in Zn(2+) binding. N-formimidoyl-L-glutamate-binding residues include Asn-313 and Gly-315. Thr-316 contacts 4-imidazolone-5-propanoate.

Belongs to the metallo-dependent hydrolases superfamily. HutI family. Requires Zn(2+) as cofactor. The cofactor is Fe(3+).

Its subcellular location is the cytoplasm. The enzyme catalyses 4-imidazolone-5-propanoate + H2O = N-formimidoyl-L-glutamate. It functions in the pathway amino-acid degradation; L-histidine degradation into L-glutamate; N-formimidoyl-L-glutamate from L-histidine: step 3/3. In terms of biological role, catalyzes the hydrolytic cleavage of the carbon-nitrogen bond in imidazolone-5-propanoate to yield N-formimidoyl-L-glutamate. It is the third step in the universal histidine degradation pathway. The polypeptide is Imidazolonepropionase (Acinetobacter baumannii (strain ATCC 17978 / DSM 105126 / CIP 53.77 / LMG 1025 / NCDC KC755 / 5377)).